The sequence spans 156 residues: Ribosomal RNA large subunit methyltransferase H (156 aa).

S-adenosyl-L-methionine is bound by residues L73, G104, and 123–128; that span reads ISSMTL.

The protein belongs to the RNA methyltransferase RlmH family. As to quaternary structure, homodimer.

The protein localises to the cytoplasm. The enzyme catalyses pseudouridine(1915) in 23S rRNA + S-adenosyl-L-methionine = N(3)-methylpseudouridine(1915) in 23S rRNA + S-adenosyl-L-homocysteine + H(+). Its function is as follows. Specifically methylates the pseudouridine at position 1915 (m3Psi1915) in 23S rRNA. This Burkholderia cenocepacia (strain HI2424) protein is Ribosomal RNA large subunit methyltransferase H.